Consider the following 34-residue polypeptide: Photosystem II reaction center protein M (34 aa).

A helical transmembrane segment spans residues 5–25; that stretch reads ILAFIATALFILVPTAFLLII.

The protein belongs to the PsbM family. In terms of assembly, PSII is composed of 1 copy each of membrane proteins PsbA, PsbB, PsbC, PsbD, PsbE, PsbF, PsbH, PsbI, PsbJ, PsbK, PsbL, PsbM, PsbT, PsbX, PsbY, PsbZ, Psb30/Ycf12, at least 3 peripheral proteins of the oxygen-evolving complex and a large number of cofactors. It forms dimeric complexes.

It is found in the plastid. The protein resides in the chloroplast thylakoid membrane. One of the components of the core complex of photosystem II (PSII). PSII is a light-driven water:plastoquinone oxidoreductase that uses light energy to abstract electrons from H(2)O, generating O(2) and a proton gradient subsequently used for ATP formation. It consists of a core antenna complex that captures photons, and an electron transfer chain that converts photonic excitation into a charge separation. This subunit is found at the monomer-monomer interface. This Coffea arabica (Arabian coffee) protein is Photosystem II reaction center protein M.